A 1185-amino-acid chain; its full sequence is DNA-directed RNA polymerase subunit beta' (1185 aa).

Zn(2+)-binding residues include Cys60, Cys62, Cys75, and Cys78. Positions 449, 451, and 453 each coordinate Mg(2+). Positions 774, 853, 860, and 863 each coordinate Zn(2+).

Belongs to the RNA polymerase beta' chain family. The RNAP catalytic core consists of 2 alpha, 1 beta, 1 beta' and 1 omega subunit. When a sigma factor is associated with the core the holoenzyme is formed, which can initiate transcription. It depends on Mg(2+) as a cofactor. Requires Zn(2+) as cofactor.

It carries out the reaction RNA(n) + a ribonucleoside 5'-triphosphate = RNA(n+1) + diphosphate. Functionally, DNA-dependent RNA polymerase catalyzes the transcription of DNA into RNA using the four ribonucleoside triphosphates as substrates. This is DNA-directed RNA polymerase subunit beta' from Desulforamulus reducens (strain ATCC BAA-1160 / DSM 100696 / MI-1) (Desulfotomaculum reducens).